The sequence spans 562 residues: Gut esterase 1 (562 aa).

A signal peptide spans 1 to 16 (MRVLLASLLIFGACWA). Cys-75 and Cys-93 are joined by a disulfide. Ser-199 (acyl-ester intermediate) is an active-site residue. Cysteines 251 and 259 form a disulfide. Active-site charge relay system residues include Glu-320 and His-451. A Prevents secretion from ER motif is present at residues 559-562 (KDEL).

It belongs to the type-B carboxylesterase/lipase family. As to expression, expressed only in the intestine.

It localises to the endoplasmic reticulum lumen. It carries out the reaction a carboxylic ester + H2O = an alcohol + a carboxylate + H(+). The sequence is that of Gut esterase 1 (ges-1) from Caenorhabditis briggsae.